Here is a 364-residue protein sequence, read N- to C-terminus: Peptide chain release factor 1 (364 aa).

The residue at position 230 (Q230) is an N5-methylglutamine.

This sequence belongs to the prokaryotic/mitochondrial release factor family. In terms of processing, methylated by PrmC. Methylation increases the termination efficiency of RF1.

It localises to the cytoplasm. Its function is as follows. Peptide chain release factor 1 directs the termination of translation in response to the peptide chain termination codons UAG and UAA. The sequence is that of Peptide chain release factor 1 from Acidothermus cellulolyticus (strain ATCC 43068 / DSM 8971 / 11B).